We begin with the raw amino-acid sequence, 266 residues long: Methionine aminopeptidase 1 (266 aa).

His88 lines the substrate pocket. Asp106, Asp117, and His186 together coordinate a divalent metal cation. Position 193 (His193) interacts with substrate. Residues Glu219 and Glu250 each coordinate a divalent metal cation.

The protein belongs to the peptidase M24A family. Methionine aminopeptidase type 1 subfamily. In terms of assembly, monomer. The cofactor is Co(2+). Requires Zn(2+) as cofactor. It depends on Mn(2+) as a cofactor. Fe(2+) is required as a cofactor.

It carries out the reaction Release of N-terminal amino acids, preferentially methionine, from peptides and arylamides.. Functionally, removes the N-terminal methionine from nascent proteins. The N-terminal methionine is often cleaved when the second residue in the primary sequence is small and uncharged (Met-Ala-, Cys, Gly, Pro, Ser, Thr, or Val). Requires deformylation of the N(alpha)-formylated initiator methionine before it can be hydrolyzed. This Mycobacterium tuberculosis (strain CDC 1551 / Oshkosh) protein is Methionine aminopeptidase 1.